We begin with the raw amino-acid sequence, 403 residues long: S-adenosylmethionine synthase (403 aa).

His-17 is a binding site for ATP. Asp-19 is a binding site for Mg(2+). Glu-45 contributes to the K(+) binding site. L-methionine-binding residues include Glu-58 and Gln-104. Residues Gln-104–Thr-114 form a flexible loop region. ATP is bound by residues Asp-179–Lys-181, Lys-250–Phe-251, Asp-259, Arg-265–Lys-266, Ala-282, and Lys-286. Residue Asp-259 coordinates L-methionine. Lys-290 provides a ligand contact to L-methionine.

It belongs to the AdoMet synthase family. In terms of assembly, homotetramer; dimer of dimers. Mg(2+) is required as a cofactor. It depends on K(+) as a cofactor.

It is found in the cytoplasm. It catalyses the reaction L-methionine + ATP + H2O = S-adenosyl-L-methionine + phosphate + diphosphate. It participates in amino-acid biosynthesis; S-adenosyl-L-methionine biosynthesis; S-adenosyl-L-methionine from L-methionine: step 1/1. Its function is as follows. Catalyzes the formation of S-adenosylmethionine (AdoMet) from methionine and ATP. The overall synthetic reaction is composed of two sequential steps, AdoMet formation and the subsequent tripolyphosphate hydrolysis which occurs prior to release of AdoMet from the enzyme. The sequence is that of S-adenosylmethionine synthase from Mycolicibacterium paratuberculosis (strain ATCC BAA-968 / K-10) (Mycobacterium paratuberculosis).